Reading from the N-terminus, the 392-residue chain is Bifunctional enzyme Fae/Hps (392 aa).

The formaldehyde-activating enzyme stretch occupies residues 1-161 (MFQIGEALMG…EESNKSTHAI (161 aa)). Catalysis depends on histidine 17, which acts as the Proton donor. Aspartate 19, leucine 48, lysine 66, threonine 68, and glutamine 83 together coordinate substrate. A 3-hexulose-6-phosphate synthase region spans residues 162-392 (MGFKVTRLWD…IDQFRVMTDF (231 aa)).

This sequence in the N-terminal section; belongs to the formaldehyde-activating enzyme family. It in the C-terminal section; belongs to the HPS/KGPDC family. HPS subfamily.

The catalysed reaction is 5,6,7,8-tetrahydromethanopterin + formaldehyde = 5,10-methylenetetrahydromethanopterin + H2O. It carries out the reaction D-ribulose 5-phosphate + formaldehyde = D-arabino-hex-3-ulose 6-phosphate. It participates in carbohydrate biosynthesis; D-ribose 5-phosphate biosynthesis. Catalyzes the condensation of formaldehyde with tetrahydromethanopterin (H(4)MPT) to 5,10-methylenetetrahydromethanopterin. In terms of biological role, catalyzes the reversible formation of ribulose-5-phosphate and formaldehyde from 3-hexulose-6-phosphate. The polypeptide is Bifunctional enzyme Fae/Hps (Methanosarcina acetivorans (strain ATCC 35395 / DSM 2834 / JCM 12185 / C2A)).